The following is a 455-amino-acid chain: UDP-N-acetylmuramoylalanine--D-glutamate ligase (455 aa).

117 to 123 (GTNGKTT) serves as a coordination point for ATP.

Belongs to the MurCDEF family.

It is found in the cytoplasm. It carries out the reaction UDP-N-acetyl-alpha-D-muramoyl-L-alanine + D-glutamate + ATP = UDP-N-acetyl-alpha-D-muramoyl-L-alanyl-D-glutamate + ADP + phosphate + H(+). The protein operates within cell wall biogenesis; peptidoglycan biosynthesis. In terms of biological role, cell wall formation. Catalyzes the addition of glutamate to the nucleotide precursor UDP-N-acetylmuramoyl-L-alanine (UMA). This is UDP-N-acetylmuramoylalanine--D-glutamate ligase from Alkaliphilus metalliredigens (strain QYMF).